Here is a 219-residue protein sequence, read N- to C-terminus: Probable nicotinate-nucleotide adenylyltransferase (219 aa).

The protein belongs to the NadD family.

The enzyme catalyses nicotinate beta-D-ribonucleotide + ATP + H(+) = deamido-NAD(+) + diphosphate. It participates in cofactor biosynthesis; NAD(+) biosynthesis; deamido-NAD(+) from nicotinate D-ribonucleotide: step 1/1. In terms of biological role, catalyzes the reversible adenylation of nicotinate mononucleotide (NaMN) to nicotinic acid adenine dinucleotide (NaAD). The chain is Probable nicotinate-nucleotide adenylyltransferase from Cronobacter sakazakii (strain ATCC BAA-894) (Enterobacter sakazakii).